The sequence spans 884 residues: Alanine--tRNA ligase (884 aa).

4 residues coordinate Zn(2+): histidine 562, histidine 566, cysteine 676, and histidine 680.

It belongs to the class-II aminoacyl-tRNA synthetase family. Zn(2+) serves as cofactor.

It localises to the cytoplasm. It catalyses the reaction tRNA(Ala) + L-alanine + ATP = L-alanyl-tRNA(Ala) + AMP + diphosphate. In terms of biological role, catalyzes the attachment of alanine to tRNA(Ala) in a two-step reaction: alanine is first activated by ATP to form Ala-AMP and then transferred to the acceptor end of tRNA(Ala). Also edits incorrectly charged Ser-tRNA(Ala) and Gly-tRNA(Ala) via its editing domain. The polypeptide is Alanine--tRNA ligase (Jannaschia sp. (strain CCS1)).